The sequence spans 503 residues: Maturase K (503 aa).

The protein belongs to the intron maturase 2 family. MatK subfamily.

The protein localises to the plastid. Its subcellular location is the chloroplast. Usually encoded in the trnK tRNA gene intron. Probably assists in splicing its own and other chloroplast group II introns. In Backhousia myrtifolia (Grey myrtle), this protein is Maturase K.